Reading from the N-terminus, the 541-residue chain is Chaperonin GroEL (541 aa).

ATP-binding positions include 29–32 (TLGP), 86–90 (DGTTT), G413, 477–479 (DAL), and D493.

This sequence belongs to the chaperonin (HSP60) family. In terms of assembly, forms a cylinder of 14 subunits composed of two heptameric rings stacked back-to-back. Interacts with the co-chaperonin GroES.

The protein localises to the cytoplasm. It carries out the reaction ATP + H2O + a folded polypeptide = ADP + phosphate + an unfolded polypeptide.. Its function is as follows. Together with its co-chaperonin GroES, plays an essential role in assisting protein folding. The GroEL-GroES system forms a nano-cage that allows encapsulation of the non-native substrate proteins and provides a physical environment optimized to promote and accelerate protein folding. This Clostridium botulinum (strain Loch Maree / Type A3) protein is Chaperonin GroEL.